The primary structure comprises 302 residues: Recombination-associated protein RdgC (302 aa).

This sequence belongs to the RdgC family.

The protein resides in the cytoplasm. It localises to the nucleoid. Functionally, may be involved in recombination. In Actinobacillus pleuropneumoniae serotype 7 (strain AP76), this protein is Recombination-associated protein RdgC.